A 63-amino-acid chain; its full sequence is Cecropin-2 (63 aa).

The signal sequence occupies residues 1–21; sequence MNFNKVLVLLAVIFAVFAGQT. Residues 22–23 constitute a propeptide that is removed on maturation; that stretch reads EA. Lys-62 bears the Lysine amide mark.

This sequence belongs to the cecropin family.

It is found in the secreted. Its function is as follows. Cecropins have lytic and antibacterial activity against several Gram-positive and Gram-negative bacteria. The protein is Cecropin-2 (CEC2) of Ceratitis capitata (Mediterranean fruit fly).